The sequence spans 506 residues: Probable alpha-L-arabinofuranosidase B (506 aa).

Positions 1–26 are cleaved as a signal peptide; the sequence is MSSGLSLERACAVALGIVASASLVAA. The interval 27–343 is catalytic; sequence GPCDIYSSGG…ADIVAAKYAI (317 aa). Disulfide bonds link cysteine 29–cysteine 39, cysteine 89–cysteine 94, and cysteine 184–cysteine 185. N-linked (GlcNAc...) asparagine glycosylation is present at asparagine 91. Aspartate 227 is a binding site for substrate. Glutamate 229 (nucleophile) is an active-site residue. 2 residues coordinate substrate: asparagine 230 and glycine 304. Catalysis depends on aspartate 305, which acts as the Proton donor. Residues 344-506 form an ABD region; it reads ASLTSGPALT…VSWVVSTGFA (163 aa). Cysteine 409 and cysteine 447 are joined by a disulfide. Substrate is bound by residues histidine 424, asparagine 426, phenylalanine 427, aspartate 443, histidine 471, glutamate 473, leucine 476, and aspartate 496.

Belongs to the glycosyl hydrolase 54 family.

The protein localises to the secreted. The catalysed reaction is Hydrolysis of terminal non-reducing alpha-L-arabinofuranoside residues in alpha-L-arabinosides.. Its pathway is glycan metabolism; L-arabinan degradation. Alpha-L-arabinofuranosidase involved in the degradation of arabinoxylan, a major component of plant hemicellulose. Able to hydrolyze 1,5-, 1,3- and 1,2-alpha-linkages not only in L-arabinofuranosyl oligosaccharides, but also in polysaccharides containing terminal non-reducing L-arabinofuranoses in side chains, like L-arabinan, arabinogalactan and arabinoxylan. This chain is Probable alpha-L-arabinofuranosidase B (abfB), found in Aspergillus flavus (strain ATCC 200026 / FGSC A1120 / IAM 13836 / NRRL 3357 / JCM 12722 / SRRC 167).